The sequence spans 322 residues: Fructose-1,6-bisphosphatase class 1 (322 aa).

Residues Glu-84, Asp-103, Leu-105, and Asp-106 each coordinate Mg(2+). Residues 106–109 (DGSS), Asn-198, and Lys-264 contribute to the substrate site. Glu-270 contributes to the Mg(2+) binding site.

The protein belongs to the FBPase class 1 family. As to quaternary structure, homotetramer. Requires Mg(2+) as cofactor.

It is found in the cytoplasm. It catalyses the reaction beta-D-fructose 1,6-bisphosphate + H2O = beta-D-fructose 6-phosphate + phosphate. It participates in carbohydrate biosynthesis; gluconeogenesis. The chain is Fructose-1,6-bisphosphatase class 1 from Colwellia psychrerythraea (strain 34H / ATCC BAA-681) (Vibrio psychroerythus).